Consider the following 385-residue polypeptide: Homoserine O-succinyltransferase (385 aa).

Residues 46 to 355 form the AB hydrolase-1 domain; sequence NAILICHALS…NSQHGHDAFL (310 aa). The active-site Nucleophile is the serine 151. Position 221 (arginine 221) interacts with substrate. Active-site residues include aspartate 318 and histidine 351. Aspartate 352 serves as a coordination point for substrate.

Belongs to the AB hydrolase superfamily. MetX family. As to quaternary structure, homodimer.

The protein localises to the cytoplasm. It carries out the reaction L-homoserine + succinyl-CoA = O-succinyl-L-homoserine + CoA. It functions in the pathway amino-acid biosynthesis; L-methionine biosynthesis via de novo pathway; O-succinyl-L-homoserine from L-homoserine: step 1/1. Functionally, transfers a succinyl group from succinyl-CoA to L-homoserine, forming succinyl-L-homoserine. This chain is Homoserine O-succinyltransferase, found in Hydrogenovibrio crunogenus (strain DSM 25203 / XCL-2) (Thiomicrospira crunogena).